A 63-amino-acid polypeptide reads, in one-letter code: Large ribosomal subunit protein bL35 (63 aa).

This sequence belongs to the bacterial ribosomal protein bL35 family.

The chain is Large ribosomal subunit protein bL35 from Finegoldia magna (strain ATCC 29328 / DSM 20472 / WAL 2508) (Peptostreptococcus magnus).